Reading from the N-terminus, the 445-residue chain is Exodeoxyribonuclease 7 large subunit (445 aa).

This sequence belongs to the XseA family. In terms of assembly, heterooligomer composed of large and small subunits.

It is found in the cytoplasm. It catalyses the reaction Exonucleolytic cleavage in either 5'- to 3'- or 3'- to 5'-direction to yield nucleoside 5'-phosphates.. Bidirectionally degrades single-stranded DNA into large acid-insoluble oligonucleotides, which are then degraded further into small acid-soluble oligonucleotides. The chain is Exodeoxyribonuclease 7 large subunit from Staphylococcus aureus (strain JH1).